Here is a 278-residue protein sequence, read N- to C-terminus: MESVSHLVSNGQSVLLVWSQGGQLDTLANFTSSLRERVGTNGTVAVENINRLSQSSYGSSTFDVALSNVVSSYCCKHTSEQLAQILKMLKPDCKCLLRDTSPSDQIRSELILAGFTNISIVAEDNATVKVNARKPNFEIGSSAALPFANKISLGGNSKMETAKMWTLSSQDFVDDDIDIIDENTLIEEDDFLKPDPSSLRSQECDSAKKKRKACKNCSCGLAEEIESEKKTNGNPVSSCGSCYLGDAFRCSSCPYLGMPAFKPGEKVALPSRLLQADV.

Residues 1-147 form an N-terminal SAM-like domain region; the sequence is MESVSHLVSN…EIGSSAALPF (147 aa). The linker stretch occupies residues 147–191; it reads FANKISLGGNSKMETAKMWTLSSQDFVDDDIDIIDENTLIEEDDF. 4 residues coordinate [2Fe-2S] cluster: Cys-204, Cys-214, Cys-217, and Cys-219. The interval 204–219 is fe-S binding site A; that stretch reads CDSAKKKRKACKNCSC. 4 residues coordinate [4Fe-4S] cluster: Cys-239, Cys-242, Cys-250, and Cys-253. 2 short sequence motifs (cx2C motif) span residues 239-242 and 250-253; these read CGSC and CSSC. The interval 239-253 is fe-S binding site B; that stretch reads CGSCYLGDAFRCSSC.

This sequence belongs to the anamorsin family. Monomer. [2Fe-2S] cluster serves as cofactor. [4Fe-4S] cluster is required as a cofactor.

The protein resides in the cytoplasm. The protein localises to the mitochondrion intermembrane space. Its function is as follows. Component of the cytosolic iron-sulfur (Fe-S) protein assembly (CIA) machinery. Required for the maturation of extramitochondrial Fe-S proteins. Part of an electron transfer chain functioning in an early step of cytosolic Fe-S biogenesis, facilitating the de novo assembly of a [4Fe-4S] cluster on the cytosolic Fe-S scaffold complex. Electrons are transferred from NADPH via a FAD- and FMN-containing diflavin oxidoreductase. Together with the diflavin oxidoreductase, also required for the assembly of the diferric tyrosyl radical cofactor of ribonucleotide reductase (RNR), probably by providing electrons for reduction during radical cofactor maturation in the catalytic small subunit. The sequence is that of Anamorsin homolog from Trichoplax adhaerens (Trichoplax reptans).